Consider the following 338-residue polypeptide: Nickel transporter NixA (338 aa).

The next 8 helical transmembrane spans lie at 11–31 (WLPY…FLWI), 37–57 (HILF…AFDA), 79–99 (GVGF…AVFL), 127–147 (FFLV…INLF), 187–207 (VLPL…IALL), 217–237 (AISF…MSLL), 266–286 (ITAI…LQIL), and 307–327 (YLGY…SLIW).

The protein belongs to the NiCoT transporter (TC 2.A.52) family.

It localises to the cell membrane. Secondary nickel transporter. Required for full urease activity. This chain is Nickel transporter NixA, found in Staphylococcus aureus (strain NCTC 8325 / PS 47).